The chain runs to 172 residues: Cell division protein SepF (172 aa).

The interval 16 to 78 is disordered; that stretch reads DGDEHYEPQP…RAASNRDDSS (63 aa). Positions 17–48 are enriched in basic and acidic residues; it reads GDEHYEPQPEGKQTRPAQKNEEYVDQEIRHTE.

The protein belongs to the SepF family. In terms of assembly, homodimer. Interacts with FtsZ.

It is found in the cytoplasm. Functionally, cell division protein that is part of the divisome complex and is recruited early to the Z-ring. Probably stimulates Z-ring formation, perhaps through the cross-linking of FtsZ protofilaments. Its function overlaps with FtsA. The polypeptide is Cell division protein SepF (Renibacterium salmoninarum (strain ATCC 33209 / DSM 20767 / JCM 11484 / NBRC 15589 / NCIMB 2235)).